The sequence spans 316 residues: Ornithine carbamoyltransferase (316 aa).

Residues 57 to 60 (STRT), Gln84, Arg108, and 135 to 138 (HPCQ) each bind carbamoyl phosphate. L-ornithine-binding positions include Asn166, Asp230, and 234–235 (SM). Carbamoyl phosphate is bound by residues 269-270 (CL) and Arg297.

The protein belongs to the aspartate/ornithine carbamoyltransferase superfamily. OTCase family.

It localises to the cytoplasm. The catalysed reaction is carbamoyl phosphate + L-ornithine = L-citrulline + phosphate + H(+). It participates in amino-acid biosynthesis; L-arginine biosynthesis; L-arginine from L-ornithine and carbamoyl phosphate: step 1/3. Reversibly catalyzes the transfer of the carbamoyl group from carbamoyl phosphate (CP) to the N(epsilon) atom of ornithine (ORN) to produce L-citrulline. The sequence is that of Ornithine carbamoyltransferase (argF) from Bacillus cereus (strain ATCC 14579 / DSM 31 / CCUG 7414 / JCM 2152 / NBRC 15305 / NCIMB 9373 / NCTC 2599 / NRRL B-3711).